Reading from the N-terminus, the 227-residue chain is Cytochrome c oxidase subunit 2 (227 aa).

Residues 1 to 14 are Mitochondrial intermembrane-facing; it reads MAYPFQLGLQDATS. A helical transmembrane segment spans residues 15 to 45; that stretch reads PIMEELLHFHDHTLMIVFLISSLVLYIITLM. At 46 to 59 the chain is on the mitochondrial matrix side; the sequence is LTTKLTHTSTMDAQ. The chain crosses the membrane as a helical span at residues 60-87; that stretch reads EVETVWTILPAIILILIALPSLRILYMM. The Mitochondrial intermembrane segment spans residues 88-227; that stretch reads DEINNPSLTV…YFETWSAVMV (140 aa). Positions 161, 196, 198, 200, 204, and 207 each coordinate Cu cation. E198 serves as a coordination point for Mg(2+). Y218 is subject to Phosphotyrosine.

Belongs to the cytochrome c oxidase subunit 2 family. As to quaternary structure, component of the cytochrome c oxidase (complex IV, CIV), a multisubunit enzyme composed of 14 subunits. The complex is composed of a catalytic core of 3 subunits MT-CO1, MT-CO2 and MT-CO3, encoded in the mitochondrial DNA, and 11 supernumerary subunits COX4I, COX5A, COX5B, COX6A, COX6B, COX6C, COX7A, COX7B, COX7C, COX8 and NDUFA4, which are encoded in the nuclear genome. The complex exists as a monomer or a dimer and forms supercomplexes (SCs) in the inner mitochondrial membrane with NADH-ubiquinone oxidoreductase (complex I, CI) and ubiquinol-cytochrome c oxidoreductase (cytochrome b-c1 complex, complex III, CIII), resulting in different assemblies (supercomplex SCI(1)III(2)IV(1) and megacomplex MCI(2)III(2)IV(2)). Found in a complex with TMEM177, COA6, COX18, COX20, SCO1 and SCO2. Interacts with TMEM177 in a COX20-dependent manner. Interacts with COX20. Interacts with COX16. Cu cation serves as cofactor.

It localises to the mitochondrion inner membrane. The enzyme catalyses 4 Fe(II)-[cytochrome c] + O2 + 8 H(+)(in) = 4 Fe(III)-[cytochrome c] + 2 H2O + 4 H(+)(out). Its function is as follows. Component of the cytochrome c oxidase, the last enzyme in the mitochondrial electron transport chain which drives oxidative phosphorylation. The respiratory chain contains 3 multisubunit complexes succinate dehydrogenase (complex II, CII), ubiquinol-cytochrome c oxidoreductase (cytochrome b-c1 complex, complex III, CIII) and cytochrome c oxidase (complex IV, CIV), that cooperate to transfer electrons derived from NADH and succinate to molecular oxygen, creating an electrochemical gradient over the inner membrane that drives transmembrane transport and the ATP synthase. Cytochrome c oxidase is the component of the respiratory chain that catalyzes the reduction of oxygen to water. Electrons originating from reduced cytochrome c in the intermembrane space (IMS) are transferred via the dinuclear copper A center (CU(A)) of subunit 2 and heme A of subunit 1 to the active site in subunit 1, a binuclear center (BNC) formed by heme A3 and copper B (CU(B)). The BNC reduces molecular oxygen to 2 water molecules using 4 electrons from cytochrome c in the IMS and 4 protons from the mitochondrial matrix. In Vulpes vulpes (Red fox), this protein is Cytochrome c oxidase subunit 2 (MT-CO2).